A 220-amino-acid polypeptide reads, in one-letter code: MNLRQLSEHVFQCEFELDVPLRIPVHTWFIKDGDDVYIVDTGIERFADAQIRAALAIGNPKAILLTHGHSDHIGGASKWLERFDIPIFAHQKELKYINGEEPYPNKNEVENTGVAHIVQPLTEQTLAHLPLKYYLTPGHSPGHVVYYHKIDRTLLTGDLFITSKEDLHPPIRRFSVDINENIDSGSIIDQIKPTLICSSHGEEILYNEELYKNYVVRYRD.

Residues His-67, His-69, Asp-71, His-72, His-139, Asp-158, and His-200 each coordinate Zn(2+).

Belongs to the metallo-beta-lactamase superfamily. Zn(2+) serves as cofactor.

The chain is Probable metallo-hydrolase YybB (yybB) from Bacillus subtilis (strain 168).